The following is a 431-amino-acid chain: Serine--tRNA ligase (431 aa).

236–238 is a binding site for L-serine; the sequence is TAE. 267–269 contacts ATP; it reads RSE. Glu-290 provides a ligand contact to L-serine. 354-357 serves as a coordination point for ATP; it reads EISS. Ser-389 is a binding site for L-serine.

This sequence belongs to the class-II aminoacyl-tRNA synthetase family. Type-1 seryl-tRNA synthetase subfamily. As to quaternary structure, homodimer. The tRNA molecule binds across the dimer.

It localises to the cytoplasm. The enzyme catalyses tRNA(Ser) + L-serine + ATP = L-seryl-tRNA(Ser) + AMP + diphosphate + H(+). It carries out the reaction tRNA(Sec) + L-serine + ATP = L-seryl-tRNA(Sec) + AMP + diphosphate + H(+). The protein operates within aminoacyl-tRNA biosynthesis; selenocysteinyl-tRNA(Sec) biosynthesis; L-seryl-tRNA(Sec) from L-serine and tRNA(Sec): step 1/1. In terms of biological role, catalyzes the attachment of serine to tRNA(Ser). Is also able to aminoacylate tRNA(Sec) with serine, to form the misacylated tRNA L-seryl-tRNA(Sec), which will be further converted into selenocysteinyl-tRNA(Sec). The protein is Serine--tRNA ligase of Herminiimonas arsenicoxydans.